We begin with the raw amino-acid sequence, 1080 residues long: Serine/threonine-protein kinase KIC1 (1080 aa).

Positions 23-276 (FKRTEVIGRG…ADDLLKSKFI (254 aa)) constitute a Protein kinase domain. Residues 29-37 (IGRGKFGVV) and lysine 52 contribute to the ATP site. Aspartate 144 serves as the catalytic Proton acceptor. Disordered stretches follow at residues 308-347 (EGSIPENEPSKPSEAPKPSQNGGGDEAQKSIASNDNEIKR), 615-760 (KARS…LAPP), 787-831 (STLN…LQMP), and 901-956 (SQSI…NTGN). Over residues 312 to 326 (PENEPSKPSEAPKPS) the composition is skewed to low complexity. Positions 615–626 (KARSSTVTAGTP) are enriched in polar residues. Residues 627-638 (SSSSSIQYKSPS) are compositionally biased toward low complexity. Residues 656–673 (STITNQKLGSAVASNSGI) show a composition bias toward polar residues. Positions 674 to 689 (SSTPNNSNNYNNNTDS) are enriched in low complexity. Residues 693–726 (RGSSGSNTANSTQMGITNPGNVTKLSTHKASSPS) show a composition bias toward polar residues. Serine 735 carries the post-translational modification Phosphoserine. Positions 743 to 756 (SPTQNIGHNSTHTN) are enriched in polar residues. The span at 787 to 807 (STLNTISGNSSNNLTSSNYFS) shows a compositional bias: low complexity. The span at 808–821 (NEKEGSRVNGDFKR) shows a compositional bias: basic and acidic residues. Polar residues predominate over residues 901 to 913 (SQSISNRKNSSAS). Low complexity predominate over residues 918–956 (NILGSSVSGNVSGIGNNNVGSNNNSGPNNSVPLSANTGN).

It belongs to the protein kinase superfamily. Ser/Thr protein kinase family. Interacts with CDC31.

The enzyme catalyses L-seryl-[protein] + ATP = O-phospho-L-seryl-[protein] + ADP + H(+). The catalysed reaction is L-threonyl-[protein] + ATP = O-phospho-L-threonyl-[protein] + ADP + H(+). Protein kinase involved in morphogenesis and cell integrity. This Saccharomyces cerevisiae (strain ATCC 204508 / S288c) (Baker's yeast) protein is Serine/threonine-protein kinase KIC1 (KIC1).